We begin with the raw amino-acid sequence, 197 residues long: Recombination protein RecR (197 aa).

Residues 57–72 (CSVCFGITEDDPCRFC) form a C4-type zinc finger. The 96-residue stretch at 79–174 (GAICVVEEPQ…RVTRLAHGIP (96 aa)) folds into the Toprim domain.

Belongs to the RecR family.

Functionally, may play a role in DNA repair. It seems to be involved in an RecBC-independent recombinational process of DNA repair. It may act with RecF and RecO. The chain is Recombination protein RecR from Geobacter sulfurreducens (strain ATCC 51573 / DSM 12127 / PCA).